A 611-amino-acid polypeptide reads, in one-letter code: Dihydroxy-acid dehydratase (611 aa).

Aspartate 81 contributes to the Mg(2+) binding site. Cysteine 122 provides a ligand contact to [2Fe-2S] cluster. Mg(2+) is bound by residues aspartate 123 and lysine 124. Lysine 124 bears the N6-carboxylysine mark. Cysteine 195 is a binding site for [2Fe-2S] cluster. Mg(2+) is bound at residue glutamate 491. Residue serine 517 is the Proton acceptor of the active site.

This sequence belongs to the IlvD/Edd family. Homodimer. [2Fe-2S] cluster serves as cofactor. Mg(2+) is required as a cofactor.

The enzyme catalyses (2R)-2,3-dihydroxy-3-methylbutanoate = 3-methyl-2-oxobutanoate + H2O. It catalyses the reaction (2R,3R)-2,3-dihydroxy-3-methylpentanoate = (S)-3-methyl-2-oxopentanoate + H2O. It participates in amino-acid biosynthesis; L-isoleucine biosynthesis; L-isoleucine from 2-oxobutanoate: step 3/4. The protein operates within amino-acid biosynthesis; L-valine biosynthesis; L-valine from pyruvate: step 3/4. Its function is as follows. Functions in the biosynthesis of branched-chain amino acids. Catalyzes the dehydration of (2R,3R)-2,3-dihydroxy-3-methylpentanoate (2,3-dihydroxy-3-methylvalerate) into 2-oxo-3-methylpentanoate (2-oxo-3-methylvalerate) and of (2R)-2,3-dihydroxy-3-methylbutanoate (2,3-dihydroxyisovalerate) into 2-oxo-3-methylbutanoate (2-oxoisovalerate), the penultimate precursor to L-isoleucine and L-valine, respectively. This Glaesserella parasuis serovar 5 (strain SH0165) (Haemophilus parasuis) protein is Dihydroxy-acid dehydratase.